A 314-amino-acid chain; its full sequence is Olfactory receptor 5I1 (314 aa).

Residues Met1–Ile27 lie on the Extracellular side of the membrane. The N-linked (GlcNAc...) asparagine glycan is linked to Asn7. A helical transmembrane segment spans residues Val28 to Met48. At Leu49–His56 the chain is on the cytoplasmic side. The helical transmembrane segment at Leu57–Ser77 threads the bilayer. At Asp78–Leu101 the chain is on the extracellular side. Cys99 and Cys191 are oxidised to a cystine. Residues Gln102–Tyr122 traverse the membrane as a helical segment. The Cytoplasmic segment spans residues Asp123–Gly141. The chain crosses the membrane as a helical span at residues Ile142–Thr162. Over Ser163 to Glu198 the chain is Extracellular. Residues Trp199 to Ser219 traverse the membrane as a helical segment. Over Tyr220–Thr239 the chain is Cytoplasmic. A helical transmembrane segment spans residues Phe240–Ile260. The Extracellular portion of the chain corresponds to Tyr261–Asp273. Residues Lys274–Leu294 form a helical membrane-spanning segment. Residues Arg295 to Ser314 lie on the Cytoplasmic side of the membrane.

It belongs to the G-protein coupled receptor 1 family.

Its subcellular location is the cell membrane. Odorant receptor. In Homo sapiens (Human), this protein is Olfactory receptor 5I1 (OR5I1).